Consider the following 196-residue polypeptide: Crossover junction endodeoxyribonuclease RuvC (196 aa).

Active-site residues include Asp19, Glu80, and Asp153. Asp19, Glu80, and Asp153 together coordinate Mg(2+).

The protein belongs to the RuvC family. In terms of assembly, homodimer which binds Holliday junction (HJ) DNA. The HJ becomes 2-fold symmetrical on binding to RuvC with unstacked arms; it has a different conformation from HJ DNA in complex with RuvA. In the full resolvosome a probable DNA-RuvA(4)-RuvB(12)-RuvC(2) complex forms which resolves the HJ. Mg(2+) serves as cofactor.

Its subcellular location is the cytoplasm. It catalyses the reaction Endonucleolytic cleavage at a junction such as a reciprocal single-stranded crossover between two homologous DNA duplexes (Holliday junction).. The RuvA-RuvB-RuvC complex processes Holliday junction (HJ) DNA during genetic recombination and DNA repair. Endonuclease that resolves HJ intermediates. Cleaves cruciform DNA by making single-stranded nicks across the HJ at symmetrical positions within the homologous arms, yielding a 5'-phosphate and a 3'-hydroxyl group; requires a central core of homology in the junction. The consensus cleavage sequence is 5'-(A/T)TT(C/G)-3'. Cleavage occurs on the 3'-side of the TT dinucleotide at the point of strand exchange. HJ branch migration catalyzed by RuvA-RuvB allows RuvC to scan DNA until it finds its consensus sequence, where it cleaves and resolves the cruciform DNA. The polypeptide is Crossover junction endodeoxyribonuclease RuvC (Cutibacterium acnes (strain DSM 16379 / KPA171202) (Propionibacterium acnes)).